A 66-amino-acid chain; its full sequence is Ornithorhynchus venom defensin-like peptide A (66 aa).

The first 22 residues, 1–22 (MRLTYLLLLLVAVLFQAGSGSA), serve as a signal peptide directing secretion. Residues 23–24 (EP) constitute a propeptide that is removed on maturation. 3 disulfides stabilise this stretch: Cys-33–Cys-63, Cys-40–Cys-56, and Cys-48–Cys-64.

In terms of tissue distribution, produced by the crural gland and detected in venom from the spur located on each male hind leg. Is the only OvDLP that is expressed in venom gland alone.

Its subcellular location is the secreted. In terms of biological role, does not show antimicrobial, myotoxic, hemolytic and cell-promoting activities. In Ornithorhynchus anatinus (Duckbill platypus), this protein is Ornithorhynchus venom defensin-like peptide A.